A 140-amino-acid polypeptide reads, in one-letter code: uncharacterized protein (140 aa).

This is an uncharacterized protein from Fowlpox virus (strain NVSL) (FPV).